The sequence spans 191 residues: Fe/S biogenesis protein NfuA (191 aa).

The [4Fe-4S] cluster site is built by Cys-149 and Cys-152.

Belongs to the NfuA family. As to quaternary structure, homodimer. [4Fe-4S] cluster is required as a cofactor.

In terms of biological role, involved in iron-sulfur cluster biogenesis. Binds a 4Fe-4S cluster, can transfer this cluster to apoproteins, and thereby intervenes in the maturation of Fe/S proteins. Could also act as a scaffold/chaperone for damaged Fe/S proteins. In Salmonella arizonae (strain ATCC BAA-731 / CDC346-86 / RSK2980), this protein is Fe/S biogenesis protein NfuA.